We begin with the raw amino-acid sequence, 95 residues long: Aspartyl/glutamyl-tRNA(Asn/Gln) amidotransferase subunit C (95 aa).

Belongs to the GatC family. As to quaternary structure, heterotrimer of A, B and C subunits.

The catalysed reaction is L-glutamyl-tRNA(Gln) + L-glutamine + ATP + H2O = L-glutaminyl-tRNA(Gln) + L-glutamate + ADP + phosphate + H(+). The enzyme catalyses L-aspartyl-tRNA(Asn) + L-glutamine + ATP + H2O = L-asparaginyl-tRNA(Asn) + L-glutamate + ADP + phosphate + 2 H(+). Allows the formation of correctly charged Asn-tRNA(Asn) or Gln-tRNA(Gln) through the transamidation of misacylated Asp-tRNA(Asn) or Glu-tRNA(Gln) in organisms which lack either or both of asparaginyl-tRNA or glutaminyl-tRNA synthetases. The reaction takes place in the presence of glutamine and ATP through an activated phospho-Asp-tRNA(Asn) or phospho-Glu-tRNA(Gln). This chain is Aspartyl/glutamyl-tRNA(Asn/Gln) amidotransferase subunit C, found in Halorhodospira halophila (strain DSM 244 / SL1) (Ectothiorhodospira halophila (strain DSM 244 / SL1)).